The following is a 342-amino-acid chain: S-adenosyl-L-methionine-dependent tRNA 4-demethylwyosine synthase (342 aa).

Positions 45, 58, and 71 each coordinate [2Fe-2S] cluster. A Radical SAM core domain is found at 64–312; that stretch reads YGIHSHRCLQ…VKHLPGYHIE (249 aa). [4Fe-4S] cluster contacts are provided by cysteine 81, cysteine 85, and cysteine 88.

The protein belongs to the TYW1 family. As to quaternary structure, monomer. Requires [2Fe-2S] cluster as cofactor. The cofactor is [4Fe-4S] cluster.

It is found in the cytoplasm. The catalysed reaction is N(1)-methylguanosine(37) in tRNA(Phe) + pyruvate + S-adenosyl-L-methionine = 4-demethylwyosine(37) in tRNA(Phe) + 5'-deoxyadenosine + L-methionine + CO2 + H2O. Component of the wyosine derivatives biosynthesis pathway that catalyzes the condensation of N-methylguanine with 2 carbon atoms from pyruvate to form the tricyclic 4-demethylwyosine (imG-14) on guanosine-37 of tRNA(Phe). The chain is S-adenosyl-L-methionine-dependent tRNA 4-demethylwyosine synthase from Pyrococcus horikoshii (strain ATCC 700860 / DSM 12428 / JCM 9974 / NBRC 100139 / OT-3).